The chain runs to 346 residues: Haptoglobin-related protein (346 aa).

Residues 1 to 16 (DLGAVIYLLLWGRQLF) constitute a signal peptide (not cleaved). A Sushi domain is found at 32–85 (FPKPPEIANGYVEHLFRYQRKNYYRLRTEGDGVYTLNDKKQWINKAVGDKLPEC). The Peptidase S1 domain occupies 102–344 (ILGGHLDAKG…IHVWVQKTIA (243 aa)). Cystine bridges form between Cys249-Cys280 and Cys291-Cys321.

It belongs to the peptidase S1 family.

The protein resides in the secreted. Its function is as follows. Primate-specific plasma protein associated with apolipoprotein L-I (apoL-I)-containing high-density lipoprotein (HDL). Binds hemoglobin with high affinity and may contribute to the clearance of cell-free hemoglobin to allow hepatic recycling of heme iron. This Pan troglodytes (Chimpanzee) protein is Haptoglobin-related protein (HPR).